Here is an 81-residue protein sequence, read N- to C-terminus: 8.6 kDa transglutaminase substrate (81 aa).

In terms of assembly, multimeric. In terms of tissue distribution, hemolymph; Hemocyte.

The polypeptide is 8.6 kDa transglutaminase substrate (Tachypleus tridentatus (Japanese horseshoe crab)).